The sequence spans 339 residues: Fructose-1,6-bisphosphatase isozyme 2 (339 aa).

Residues 3–10 (DRSPFETD) are important for interaction with ALDOA. AMP contacts are provided by residues Val18 and 28–32 (TGELT). Asp69 and Glu98 together coordinate Mg(2+). 113–114 (KY) serves as a coordination point for AMP. Mg(2+) is bound by residues Asp119, Leu121, and Asp122. Residue Asp122 participates in substrate binding. An AMP-binding site is contributed by Arg141. The Nuclear localization signal signature appears at 204-208 (KKKGK). Residue 213–216 (NEGY) participates in substrate binding. Tyr216 and Tyr219 each carry phosphotyrosine. Substrate-binding positions include 245–249 (YVGSM), Tyr265, and Lys275. Glu281 provides a ligand contact to Mg(2+).

This sequence belongs to the FBPase class 1 family. Homotetramer. Interacts with ALDOA; the interaction blocks inhibition by physiological concentrations of AMP and reduces inhibition by Ca(2+). Interacts with alpha-actinin and F-actin. The cofactor is Mg(2+).

It is found in the cell junction. The protein localises to the cytoplasm. The protein resides in the nucleus. It localises to the myofibril. Its subcellular location is the sarcomere. It is found in the z line. It carries out the reaction beta-D-fructose 1,6-bisphosphate + H2O = beta-D-fructose 6-phosphate + phosphate. It functions in the pathway carbohydrate biosynthesis; gluconeogenesis. Subject to complex allosteric regulation. The enzyme can assume an active R-state, or an inactive T-state. Intermediate conformations may exist. AMP acts as an allosteric inhibitor. Fructose 2,6-bisphosphate acts as a competitive inhibitor. Strongly inhibited by Ca(2+). Functionally, catalyzes the hydrolysis of fructose 1,6-bisphosphate to fructose 6-phosphate in the presence of divalent cations and probably participates in glycogen synthesis from carbohydrate precursors, such as lactate. This Bos taurus (Bovine) protein is Fructose-1,6-bisphosphatase isozyme 2 (FBP2).